The chain runs to 316 residues: Phosphoglycerate mutase-like protein AT74 (316 aa).

The active-site Tele-phosphohistidine intermediate is the histidine 17. Catalysis depends on glutamate 106, which acts as the Proton donor/acceptor. A disordered region spans residues 275–316; it reads KECETEATEDREEEEEEEGKRVNLLTSSEYSNEPELYNGQCC. The span at 279–291 shows a compositional bias: acidic residues; it reads TEATEDREEEEEE.

The protein belongs to the phosphoglycerate mutase family. As to expression, expressed in roots, leaves, stems, flowers and siliques.

Functionally, phosphoglycerate mutase-like protein lacking PGM activity. May play a role in carbohydrates metabolism. This Arabidopsis thaliana (Mouse-ear cress) protein is Phosphoglycerate mutase-like protein AT74.